We begin with the raw amino-acid sequence, 378 residues long: UDP-N-acetylglucosamine--N-acetylmuramyl-(pentapeptide) pyrophosphoryl-undecaprenol N-acetylglucosamine transferase (378 aa).

UDP-N-acetyl-alpha-D-glucosamine contacts are provided by residues 14–16, Asn125, Arg165, Ser193, and Gln293; that span reads TGG.

Belongs to the glycosyltransferase 28 family. MurG subfamily.

The protein localises to the cell inner membrane. It carries out the reaction di-trans,octa-cis-undecaprenyl diphospho-N-acetyl-alpha-D-muramoyl-L-alanyl-D-glutamyl-meso-2,6-diaminopimeloyl-D-alanyl-D-alanine + UDP-N-acetyl-alpha-D-glucosamine = di-trans,octa-cis-undecaprenyl diphospho-[N-acetyl-alpha-D-glucosaminyl-(1-&gt;4)]-N-acetyl-alpha-D-muramoyl-L-alanyl-D-glutamyl-meso-2,6-diaminopimeloyl-D-alanyl-D-alanine + UDP + H(+). It functions in the pathway cell wall biogenesis; peptidoglycan biosynthesis. Functionally, cell wall formation. Catalyzes the transfer of a GlcNAc subunit on undecaprenyl-pyrophosphoryl-MurNAc-pentapeptide (lipid intermediate I) to form undecaprenyl-pyrophosphoryl-MurNAc-(pentapeptide)GlcNAc (lipid intermediate II). The polypeptide is UDP-N-acetylglucosamine--N-acetylmuramyl-(pentapeptide) pyrophosphoryl-undecaprenol N-acetylglucosamine transferase (Bartonella henselae (strain ATCC 49882 / DSM 28221 / CCUG 30454 / Houston 1) (Rochalimaea henselae)).